The sequence spans 417 residues: Envelope glycoprotein D (417 aa).

Residues methionine 1 to serine 18 form the signal peptide. Topologically, residues leucine 19–alanine 360 are virion surface. Asparagine 41 and asparagine 102 each carry an N-linked (GlcNAc...) asparagine; by host glycan. 3 cysteine pairs are disulfide-bonded: cysteine 75–cysteine 197, cysteine 114–cysteine 213, and cysteine 126–cysteine 135. A disordered region spans residues glutamate 259–proline 355. Residues glycine 279 to aspartate 292 show a composition bias toward acidic residues. A helical membrane pass occupies residues valine 361–threonine 389. The Intravirion portion of the chain corresponds to arginine 390–glycine 417.

It belongs to the herpesviridae glycoprotein D family.

It is found in the virion membrane. Its function is as follows. Envelope glycoprotein that binds to host cell entry receptors, promoting the virus entry into host cells. May trigger fusion with host membrane, by recruiting the fusion machinery composed of gB and gH/gL. The sequence is that of Envelope glycoprotein D (gD) from Bovine herpesvirus 1.2 (strain ST) (BoHV-1).